Here is a 75-residue protein sequence, read N- to C-terminus: MAIWVAIILIVIALIAGLIGGFLLARKYMKDYLKKNPPINEEMLRMMMMQMGQKPSQKKINQMMTMMNKNMNQKM.

The chain crosses the membrane as a helical span at residues 3 to 23 (IWVAIILIVIALIAGLIGGFL).

It belongs to the UPF0154 family.

Its subcellular location is the membrane. The sequence is that of UPF0154 protein SERP0914 from Staphylococcus epidermidis (strain ATCC 35984 / DSM 28319 / BCRC 17069 / CCUG 31568 / BM 3577 / RP62A).